The primary structure comprises 223 residues: Ribosome assembly factor mrt4 (223 aa).

The protein belongs to the universal ribosomal protein uL10 family. In terms of assembly, associates with the pre-60S ribosomal particle.

The protein resides in the nucleus. The protein localises to the nucleolus. It is found in the cytoplasm. Functionally, component of the ribosome assembly machinery. Nuclear paralog of the ribosomal protein P0, it binds pre-60S subunits at an early stage of assembly in the nucleolus, and is replaced by P0 in cytoplasmic pre-60S subunits and mature 80S ribosomes. The sequence is that of Ribosome assembly factor mrt4 from Dictyostelium discoideum (Social amoeba).